The following is a 255-amino-acid chain: Tablysin 15 (255 aa).

The N-terminal stretch at methionine 1–alanine 23 is a signal peptide. 3 disulfide bridges follow: cysteine 27–cysteine 40, cysteine 31–cysteine 117, and cysteine 49–cysteine 110. The short motif at arginine 32–aspartate 34 is the Cell attachment site element. An SCP domain is found at leucine 67–phenylalanine 211. Leukotriene E4 is bound by residues tryptophan 82, histidine 153, and lysine 156. Intrachain disulfides connect cysteine 192/cysteine 209 and cysteine 232/cysteine 243.

The protein belongs to the CRISP family. As to expression, expressed in salivary glands.

It localises to the secreted. Its function is as follows. Anti-inflammatory scavenger of eicosanoids and antithrombotic protein that inhibits platelets aggregation induced by collagen, ADP and convulxin (GPVI agonist). Exhibits high affinity binding for glycoprotein IIb-IIIa receptor (ITGA2B/ITGB3) and endothelial cell alphaVbeta3 (ITGAV/ITGB3) integrins, but not for alpha-5/beta-1 or alpha-2/beta-1. Accordingly, it blocks endothelial cell adhesion to vitronectin (IC(50)~1 nM) and marginally to fibronectin (IC(50)~1 uM), but not to collagen. It also inhibits fibroblast growth factor (FGF)-induced endothelial cell proliferation, and attenuates tube formation in vitro. In addition, it dose-dependently attenuates thrombus formation to collagen under flow. Also binds proinflammatory cysteinyl leukotrienes (leukotrienes C4 (LTC4), D4 (LTD4) and E4 (LTE4)) with submicromolar affinities. The chain is Tablysin 15 from Tabanus yao (Horsefly).